The sequence spans 342 residues: Dihydroorotase (342 aa).

Zn(2+)-binding residues include H13 and H15. Substrate is bound by residues 15–17 (HLR) and N41. Residues K98, H135, and H173 each coordinate Zn(2+). K98 is modified (N6-carboxylysine). H135 serves as a coordination point for substrate. L218 is a substrate binding site. D246 is a binding site for Zn(2+). Residue D246 is part of the active site. Substrate contacts are provided by H250 and A262.

This sequence belongs to the metallo-dependent hydrolases superfamily. DHOase family. Class II DHOase subfamily. In terms of assembly, homodimer. It depends on Zn(2+) as a cofactor.

The enzyme catalyses (S)-dihydroorotate + H2O = N-carbamoyl-L-aspartate + H(+). It participates in pyrimidine metabolism; UMP biosynthesis via de novo pathway; (S)-dihydroorotate from bicarbonate: step 3/3. Functionally, catalyzes the reversible cyclization of carbamoyl aspartate to dihydroorotate. The chain is Dihydroorotase from Vibrio vulnificus (strain CMCP6).